A 156-amino-acid polypeptide reads, in one-letter code: Transcription elongation factor GreA (156 aa).

Residues 12-72 (YKKLEDELST…KEIEHELKYA (61 aa)) are a coiled coil.

The protein belongs to the GreA/GreB family.

Functionally, necessary for efficient RNA polymerase transcription elongation past template-encoded arresting sites. The arresting sites in DNA have the property of trapping a certain fraction of elongating RNA polymerases that pass through, resulting in locked ternary complexes. Cleavage of the nascent transcript by cleavage factors such as GreA or GreB allows the resumption of elongation from the new 3'terminus. GreA releases sequences of 2 to 3 nucleotides. This chain is Transcription elongation factor GreA, found in Dehalococcoides mccartyi (strain ATCC BAA-2266 / KCTC 15142 / 195) (Dehalococcoides ethenogenes (strain 195)).